The primary structure comprises 291 residues: Probable 2-(5''-triphosphoribosyl)-3'-dephosphocoenzyme-A synthase (291 aa).

Belongs to the CitG/MdcB family.

It catalyses the reaction 3'-dephospho-CoA + ATP = 2'-(5''-triphospho-alpha-D-ribosyl)-3'-dephospho-CoA + adenine. In terms of biological role, involved in the formation of 2-(5''-phosphoribosyl)-3'-dephosphocoenzyme-A, the prosthetic group of the acyl-carrier protein of the malonate decarboxylase. This Pseudomonas syringae pv. syringae (strain B728a) protein is Probable 2-(5''-triphosphoribosyl)-3'-dephosphocoenzyme-A synthase.